We begin with the raw amino-acid sequence, 504 residues long: Probable alpha-L-arabinofuranosidase C (504 aa).

Residues Asn-152, Asn-181, Asn-269, and Asn-467 are each glycosylated (N-linked (GlcNAc...) asparagine).

The protein belongs to the glycosyl hydrolase 51 family.

It localises to the secreted. It catalyses the reaction Hydrolysis of terminal non-reducing alpha-L-arabinofuranoside residues in alpha-L-arabinosides.. The protein operates within glycan metabolism; L-arabinan degradation. In terms of biological role, alpha-L-arabinofuranosidase involved in the degradation of arabinoxylan, a major component of plant hemicellulose. Acts only on small linear 1,5-alpha-linked L-arabinofuranosyl oligosaccharides. The protein is Probable alpha-L-arabinofuranosidase C (abfC) of Aspergillus terreus (strain NIH 2624 / FGSC A1156).